A 211-amino-acid polypeptide reads, in one-letter code: Nucleoside triphosphate pyrophosphatase (211 aa).

Asp75 functions as the Proton acceptor in the catalytic mechanism.

It belongs to the Maf family. A divalent metal cation serves as cofactor.

The protein localises to the cytoplasm. It carries out the reaction a ribonucleoside 5'-triphosphate + H2O = a ribonucleoside 5'-phosphate + diphosphate + H(+). The catalysed reaction is a 2'-deoxyribonucleoside 5'-triphosphate + H2O = a 2'-deoxyribonucleoside 5'-phosphate + diphosphate + H(+). Functionally, nucleoside triphosphate pyrophosphatase. May have a dual role in cell division arrest and in preventing the incorporation of modified nucleotides into cellular nucleic acids. This chain is Nucleoside triphosphate pyrophosphatase, found in Prochlorococcus marinus (strain NATL2A).